The sequence spans 78 residues: Delta-conotoxin-like CVIE (78 aa).

The signal sequence occupies residues 1–22; it reads MKLTCMMIVAVLFLTAWTFVTA. Residues 23–49 constitute a propeptide that is removed on maturation; that stretch reads DDSRNGLKNLFPKARHEMKNPEASKLN. Intrachain disulfides connect cysteine 54/cysteine 69, cysteine 61/cysteine 73, and cysteine 68/cysteine 77. The residue at position 65 (proline 65) is a 4-hydroxyproline.

The protein belongs to the conotoxin O1 superfamily. Expressed by the venom duct.

The protein localises to the secreted. In terms of biological role, delta-conotoxins bind to site 6 of voltage-gated sodium channels (Nav) and inhibit the inactivation process. This is Delta-conotoxin-like CVIE from Conus catus (Cat cone).